A 351-amino-acid chain; its full sequence is uncharacterized protein (351 aa).

Residues histidine 23, histidine 25, lysine 151, histidine 184, histidine 212, and aspartate 270 each coordinate Zn(2+). The residue at position 151 (lysine 151) is an N6-carboxylysine.

It belongs to the metallo-dependent hydrolases superfamily. Phosphotriesterase family. It depends on Zn(2+) as a cofactor.

This is an uncharacterized protein from Mycoplasma pneumoniae (strain ATCC 29342 / M129 / Subtype 1) (Mycoplasmoides pneumoniae).